Here is a 707-residue protein sequence, read N- to C-terminus: Toxin RTX-I translocation ATP-binding protein (707 aa).

A Peptidase C39 domain is found at 1 to 125 (MDFYREEDYG…SLYQGKLILV (125 aa)). Residue histidine 83 is part of the active site. The region spanning 154-436 (FIETLIVSIF…LAQLWQDFQQ (283 aa)) is the ABC transmembrane type-1 domain. The next 5 membrane-spanning stretches (helical) occupy residues 158–178 (LIVS…FQVV), 188–208 (FSTL…EIVL), 295–315 (LVIL…SPIL), 387–407 (VVMV…DLSI), and 410–430 (LIAF…LAQL). One can recognise an ABC transporter domain in the interval 468–703 (ITFRNIRFRY…PNGLYHYLHQ (236 aa)). ATP is bound at residue 502–509 (GRSGSGKS).

The protein belongs to the ABC transporter superfamily. Protein-1 exporter (TC 3.A.1.109) family. As to quaternary structure, homodimer.

Its subcellular location is the cell membrane. Involved in the transport of the toxin RTX-I as well as that of RTX-II. The sequence is that of Toxin RTX-I translocation ATP-binding protein (apxIB) from Actinobacillus pleuropneumoniae (Haemophilus pleuropneumoniae).